An 801-amino-acid polypeptide reads, in one-letter code: Quinoprotein glucose dehydrogenase A (801 aa).

The first 33 residues, 1–33, serve as a signal peptide directing secretion; that stretch reads MNQPTSRSGLTTFTVIIIGLLALFLLIGGIWLA. 4 helical membrane-spanning segments follow: residues 39–55, 59–79, 94–108, and 119–138; these read IYYI…AWQL, ASTA…WSVW, ILGI…PAVT, and VALS…SIFN. Asp-471 (proton acceptor) is an active-site residue.

Belongs to the bacterial PQQ dehydrogenase family. In terms of assembly, monomer. Pyrroloquinoline quinone is required as a cofactor.

It localises to the cell inner membrane. The enzyme catalyses D-glucose + A = D-glucono-1,5-lactone + AH2. In terms of biological role, catalyzes an exceptionally high rate of oxidation of a wide range of aldose sugars, including D-glucose, galactose, arabinose and xylose, and also the disaccharides lactose, cellobiose and maltose. The sequence is that of Quinoprotein glucose dehydrogenase A (gdhA) from Acinetobacter calcoaceticus.